We begin with the raw amino-acid sequence, 351 residues long: Holliday junction branch migration complex subunit RuvB (351 aa).

The large ATPase domain (RuvB-L) stretch occupies residues 1 to 186 (MDEKIETRLI…FGIVQRLEFY (186 aa)). ATP contacts are provided by residues Ile25, Arg26, Gly67, Lys70, Thr71, Thr72, 133-135 (EDF), Arg176, Tyr186, and Arg223. Thr71 lines the Mg(2+) pocket. A small ATPAse domain (RuvB-S) region spans residues 187–257 (RIPDLIHIVK…IAKEALDLLN (71 aa)). Residues 260-351 (IRGLDVMDRK…ENFDLLGKVE (92 aa)) are head domain (RuvB-H). Arg296, Arg315, and Arg320 together coordinate DNA.

This sequence belongs to the RuvB family. As to quaternary structure, homohexamer. Forms an RuvA(8)-RuvB(12)-Holliday junction (HJ) complex. HJ DNA is sandwiched between 2 RuvA tetramers; dsDNA enters through RuvA and exits via RuvB. An RuvB hexamer assembles on each DNA strand where it exits the tetramer. Each RuvB hexamer is contacted by two RuvA subunits (via domain III) on 2 adjacent RuvB subunits; this complex drives branch migration. In the full resolvosome a probable DNA-RuvA(4)-RuvB(12)-RuvC(2) complex forms which resolves the HJ.

Its subcellular location is the cytoplasm. It carries out the reaction ATP + H2O = ADP + phosphate + H(+). The RuvA-RuvB-RuvC complex processes Holliday junction (HJ) DNA during genetic recombination and DNA repair, while the RuvA-RuvB complex plays an important role in the rescue of blocked DNA replication forks via replication fork reversal (RFR). RuvA specifically binds to HJ cruciform DNA, conferring on it an open structure. The RuvB hexamer acts as an ATP-dependent pump, pulling dsDNA into and through the RuvAB complex. RuvB forms 2 homohexamers on either side of HJ DNA bound by 1 or 2 RuvA tetramers; 4 subunits per hexamer contact DNA at a time. Coordinated motions by a converter formed by DNA-disengaged RuvB subunits stimulates ATP hydrolysis and nucleotide exchange. Immobilization of the converter enables RuvB to convert the ATP-contained energy into a lever motion, pulling 2 nucleotides of DNA out of the RuvA tetramer per ATP hydrolyzed, thus driving DNA branch migration. The RuvB motors rotate together with the DNA substrate, which together with the progressing nucleotide cycle form the mechanistic basis for DNA recombination by continuous HJ branch migration. Branch migration allows RuvC to scan DNA until it finds its consensus sequence, where it cleaves and resolves cruciform DNA. The chain is Holliday junction branch migration complex subunit RuvB from Coxiella burnetii (strain CbuG_Q212) (Coxiella burnetii (strain Q212)).